Here is a 423-residue protein sequence, read N- to C-terminus: Probable multifunctional protein ADE2 (423 aa).

Residues 1-263 (MSSLAEIASR…KVMDITATFS (263 aa)) form an SAICAR synthetase region. The tract at residues 264-423 (KHQQKCHVLV…NIYNANRKLE (160 aa)) is AIR carboxylase.

The protein in the N-terminal section; belongs to the SAICAR synthetase family. In the C-terminal section; belongs to the AIR carboxylase family. Class II subfamily.

The catalysed reaction is 5-amino-1-(5-phospho-D-ribosyl)imidazole-4-carboxylate + L-aspartate + ATP = (2S)-2-[5-amino-1-(5-phospho-beta-D-ribosyl)imidazole-4-carboxamido]succinate + ADP + phosphate + 2 H(+). It carries out the reaction 5-amino-1-(5-phospho-D-ribosyl)imidazole-4-carboxylate + H(+) = 5-amino-1-(5-phospho-beta-D-ribosyl)imidazole + CO2. The protein operates within purine metabolism; IMP biosynthesis via de novo pathway; 5-amino-1-(5-phospho-D-ribosyl)imidazole-4-carboxamide from 5-amino-1-(5-phospho-D-ribosyl)imidazole-4-carboxylate: step 1/2. It functions in the pathway purine metabolism; IMP biosynthesis via de novo pathway; 5-amino-1-(5-phospho-D-ribosyl)imidazole-4-carboxylate from 5-amino-1-(5-phospho-D-ribosyl)imidazole (carboxylase route): step 1/1. The sequence is that of Probable multifunctional protein ADE2 from Caenorhabditis elegans.